A 629-amino-acid polypeptide reads, in one-letter code: uncharacterized protein (629 aa).

Residues 4–255 enclose the ABC transporter 1 domain; sequence LKAENLYKTY…KRAEREAQAE (252 aa). Residue 36-43 coordinates ATP; that stretch reads GPNGTGKS. Residues 284–304 are disordered; it reads KARIDRVETLKEQTGPQSSGS. Basic and acidic residues predominate over residues 285-294; sequence ARIDRVETLK. The span at 295-304 shows a compositional bias: polar residues; it reads EQTGPQSSGS. Residues 319–537 form the ABC transporter 2 domain; the sequence is IEAENVMIAY…EESKAKKAAP (219 aa). 351 to 358 provides a ligand contact to ATP; sequence GPNGIGKT. The disordered stretch occupies residues 530-555; it reads SKAKKAAPKPAAEEKTAEAEPKKKRK. The segment covering 540–550 has biased composition (basic and acidic residues); it reads AAEEKTAEAEP. The stretch at 560 to 629 forms a coiled coil; that stretch reads KDQLEWDGIE…LSLMIEELES (70 aa).

Belongs to the ABC transporter superfamily.

This is an uncharacterized protein from Bacillus subtilis (strain 168).